The primary structure comprises 92 residues: UPF0235 protein PF1765 (92 aa).

The protein belongs to the UPF0235 family.

The sequence is that of UPF0235 protein PF1765 from Pyrococcus furiosus (strain ATCC 43587 / DSM 3638 / JCM 8422 / Vc1).